The primary structure comprises 456 residues: Na(+)/H(+) antiporter NhaA 3 (456 aa).

The next 11 helical transmembrane spans lie at 32 to 52 (IEAT…TLSN), 87 to 107 (GLMT…VVLG), 114 to 134 (MVAL…GLYL), 145 to 165 (GWGV…ALLG), 174 to 194 (VFLL…VAVG), 202 to 222 (TALA…LLGV), 233 to 253 (AIIW…GVIL), 318 to 338 (WVAF…PITI), 347 to 367 (LAVM…FAWL), 382 to 402 (WGGL…ALFI), and 417 to 437 (LGIL…LCAL).

Belongs to the NhaA Na(+)/H(+) (TC 2.A.33) antiporter family.

It localises to the cell inner membrane. It catalyses the reaction Na(+)(in) + 2 H(+)(out) = Na(+)(out) + 2 H(+)(in). Its function is as follows. Na(+)/H(+) antiporter that extrudes sodium in exchange for external protons. The protein is Na(+)/H(+) antiporter NhaA 3 of Acidiphilium cryptum (strain JF-5).